We begin with the raw amino-acid sequence, 413 residues long: Histidine--tRNA ligase (413 aa).

Belongs to the class-II aminoacyl-tRNA synthetase family. As to quaternary structure, homodimer.

It is found in the cytoplasm. It catalyses the reaction tRNA(His) + L-histidine + ATP = L-histidyl-tRNA(His) + AMP + diphosphate + H(+). This is Histidine--tRNA ligase from Geobacter metallireducens (strain ATCC 53774 / DSM 7210 / GS-15).